Consider the following 646-residue polypeptide: Serine/threonine-protein kinase sck2 (646 aa).

Disordered stretches follow at residues 17–85 (VSTN…LPEV) and 143–176 (GRDI…IQRT). Polar residues predominate over residues 68–80 (SDQSTVGNRNSND). A compositionally biased stretch (low complexity) spans 149–165 (SSRDSANVSRSSSMMSS). The region spanning 266-527 (FVPLKLIGKG…VEEVMKHPFF (262 aa)) is the Protein kinase domain. ATP is bound by residues 272-280 (IGKGTFGQV) and Lys-295. Asp-392 (proton acceptor) is an active-site residue. The AGC-kinase C-terminal domain maps to 528–605 (DGIDWKKLAA…IDASAMDEAF (78 aa)). The segment at 609 to 646 (NSNDSASSISSQDDYSKDNSDMDLNRANDEVFMGQIDP) is disordered. Low complexity predominate over residues 610 to 621 (SNDSASSISSQD). The segment covering 622–637 (DYSKDNSDMDLNRAND) has biased composition (basic and acidic residues).

It belongs to the protein kinase superfamily. AGC Ser/Thr protein kinase family. PKC subfamily.

It catalyses the reaction L-seryl-[protein] + ATP = O-phospho-L-seryl-[protein] + ADP + H(+). The enzyme catalyses L-threonyl-[protein] + ATP = O-phospho-L-threonyl-[protein] + ADP + H(+). Its function is as follows. Protein kinase that is part of growth control pathway which is at least partially redundant with the cAMP pathway. In Schizosaccharomyces pombe (strain 972 / ATCC 24843) (Fission yeast), this protein is Serine/threonine-protein kinase sck2 (sck2).